A 247-amino-acid polypeptide reads, in one-letter code: Uridylate kinase (247 aa).

17–20 (KFSG) is a binding site for ATP. Gly-59 contacts UMP. ATP is bound by residues Gly-60 and Arg-64. UMP-binding positions include Asp-79 and 140 to 147 (TGNPFFTT). Thr-167, Tyr-173, and Asp-176 together coordinate ATP.

The protein belongs to the UMP kinase family. Homohexamer.

It is found in the cytoplasm. The catalysed reaction is UMP + ATP = UDP + ADP. It functions in the pathway pyrimidine metabolism; CTP biosynthesis via de novo pathway; UDP from UMP (UMPK route): step 1/1. Inhibited by UTP. Its function is as follows. Catalyzes the reversible phosphorylation of UMP to UDP. The chain is Uridylate kinase from Legionella pneumophila (strain Lens).